The sequence spans 226 residues: Beta-casein (226 aa).

Positions 1 to 15 (MKVLILACLVALALA) are cleaved as a signal peptide. At Thr-18 the chain carries Phosphothreonine; in form 5-P. Position 21 is a phosphoserine; in form 4-P and form 5-P (Ser-21). Ser-23 is modified (phosphoserine; in form 3-P, form 4-P and form 5-P). Residues Ser-24 and Ser-25 each carry the phosphoserine; in form 1-P, form 2-P, form 3-P, form 4-P and form 5-P modification.

The protein belongs to the beta-casein family. In terms of processing, form 1-P is phosphorylated once; half of the molecules are phosphorylated on Ser-24, half on Ser-25. In terms of tissue distribution, mammary gland specific. Secreted in milk.

It is found in the secreted. Functionally, important role in determination of the surface properties of the casein micelles. In Homo sapiens (Human), this protein is Beta-casein (CSN2).